Reading from the N-terminus, the 717-residue chain is ATP-dependent zinc metalloprotease FtsH (717 aa).

At 1-7 (MFKDKKM) the chain is on the cytoplasmic side. Residues 8-28 (LKYIVIYSIIAFGILLTFNMV) form a helical membrane-spanning segment. The Extracellular portion of the chain corresponds to 29–109 (KDEMLYEKVD…VEFNVTKPEN (81 aa)). Residues 110 to 130 (YQLLGLLMSWVFPLILIFFVG) traverse the membrane as a helical segment. Residues 131 to 717 (RMMFSKMNNK…SSTNNKVDGE (587 aa)) lie on the Cytoplasmic side of the membrane. An ATP-binding site is contributed by 206 to 213 (GPPGTGKT). His427 is a binding site for Zn(2+). Glu428 is an active-site residue. 2 residues coordinate Zn(2+): His431 and Asp504. Positions 670 to 717 (KLARANNEANNDALDSSKENEEVKSNVNDGATEEKKDDSSTNNKVDGE) are disordered. Basic and acidic residues-rich tracts occupy residues 684–693 (DSSKENEEVK) and 701–717 (TEEKKDDSSTNNKVDGE).

The protein in the central section; belongs to the AAA ATPase family. It in the C-terminal section; belongs to the peptidase M41 family. In terms of assembly, homohexamer. The cofactor is Zn(2+).

The protein localises to the cell membrane. Acts as a processive, ATP-dependent zinc metallopeptidase for both cytoplasmic and membrane proteins. Plays a role in the quality control of integral membrane proteins. This Clostridium perfringens (strain ATCC 13124 / DSM 756 / JCM 1290 / NCIMB 6125 / NCTC 8237 / Type A) protein is ATP-dependent zinc metalloprotease FtsH.